A 206-amino-acid polypeptide reads, in one-letter code: Outer-membrane lipoprotein carrier protein (206 aa).

An N-terminal signal peptide occupies residues 1 to 21; that stretch reads MKKLLCAVLLSPLLYSNAVLA.

Belongs to the LolA family. Monomer.

It localises to the periplasm. Its function is as follows. Participates in the translocation of lipoproteins from the inner membrane to the outer membrane. Only forms a complex with a lipoprotein if the residue after the N-terminal Cys is not an aspartate (The Asp acts as a targeting signal to indicate that the lipoprotein should stay in the inner membrane). The sequence is that of Outer-membrane lipoprotein carrier protein from Shewanella sp. (strain MR-7).